The following is a 254-amino-acid chain: 5'/3'-nucleotidase SurE (254 aa).

Positions 9, 10, 40, and 93 each coordinate a divalent metal cation.

This sequence belongs to the SurE nucleotidase family. A divalent metal cation is required as a cofactor.

The protein localises to the cytoplasm. The enzyme catalyses a ribonucleoside 5'-phosphate + H2O = a ribonucleoside + phosphate. The catalysed reaction is a ribonucleoside 3'-phosphate + H2O = a ribonucleoside + phosphate. It catalyses the reaction [phosphate](n) + H2O = [phosphate](n-1) + phosphate + H(+). Nucleotidase with a broad substrate specificity as it can dephosphorylate various ribo- and deoxyribonucleoside 5'-monophosphates and ribonucleoside 3'-monophosphates with highest affinity to 3'-AMP. Also hydrolyzes polyphosphate (exopolyphosphatase activity) with the preference for short-chain-length substrates (P20-25). Might be involved in the regulation of dNTP and NTP pools, and in the turnover of 3'-mononucleotides produced by numerous intracellular RNases (T1, T2, and F) during the degradation of various RNAs. This chain is 5'/3'-nucleotidase SurE, found in Yersinia pestis bv. Antiqua (strain Antiqua).